The primary structure comprises 453 residues: Tryptophan biosynthesis protein TrpCF (453 aa).

Residues 1 to 257 (MMQTVLAKIV…AAVRRVLLGE (257 aa)) are indole-3-glycerol phosphate synthase. The interval 258-453 (NKVCGLTRGQ…ASVFQTLRAY (196 aa)) is N-(5'-phosphoribosyl)anthranilate isomerase.

This sequence in the N-terminal section; belongs to the TrpC family. It in the C-terminal section; belongs to the TrpF family. Monomer.

The catalysed reaction is N-(5-phospho-beta-D-ribosyl)anthranilate = 1-(2-carboxyphenylamino)-1-deoxy-D-ribulose 5-phosphate. The enzyme catalyses 1-(2-carboxyphenylamino)-1-deoxy-D-ribulose 5-phosphate + H(+) = (1S,2R)-1-C-(indol-3-yl)glycerol 3-phosphate + CO2 + H2O. Its pathway is amino-acid biosynthesis; L-tryptophan biosynthesis; L-tryptophan from chorismate: step 3/5. It participates in amino-acid biosynthesis; L-tryptophan biosynthesis; L-tryptophan from chorismate: step 4/5. Its function is as follows. Bifunctional enzyme that catalyzes two sequential steps of tryptophan biosynthetic pathway. The first reaction is catalyzed by the isomerase, coded by the TrpF domain; the second reaction is catalyzed by the synthase, coded by the TrpC domain. The protein is Tryptophan biosynthesis protein TrpCF (trpC) of Escherichia coli O157:H7.